The sequence spans 608 residues: Kelch-like protein 10 (608 aa).

The BTB domain maps to C39–P106. Kelch repeat units lie at residues I292–G339, Y340–N386, I388–G433, K434–E480, H481–D527, and L529–G574. S501 carries the phosphoserine modification.

As to quaternary structure, self-associates. Interacts with CUL3; indicative for the participation in an E3 ubiquitin ligase complex. As to expression, testis specific.

It is found in the cytoplasm. It functions in the pathway protein modification; protein ubiquitination. Functionally, may be a substrate-specific adapter of a CUL3-based E3 ubiquitin-protein ligase complex which mediates the ubiquitination and subsequent proteasomal degradation of target proteins during spermatogenesis. Required for male fertility. The polypeptide is Kelch-like protein 10 (Klhl10) (Mus musculus (Mouse)).